A 58-amino-acid polypeptide reads, in one-letter code: Small ribosomal subunit protein bS21A (58 aa).

Positions 38 to 58 (YEKPSLRRKRKAEAARKGGRN) are disordered. A compositionally biased stretch (basic and acidic residues) spans 49–58 (AEAARKGGRN).

It belongs to the bacterial ribosomal protein bS21 family.

The sequence is that of Small ribosomal subunit protein bS21A from Trichormus variabilis (strain ATCC 29413 / PCC 7937) (Anabaena variabilis).